The sequence spans 504 residues: Probable periplasmic serine endoprotease DegP-like (504 aa).

The first 26 residues, 1 to 26 (MLKTTTVAGLAAVLLTTGLPAEVAQS), serve as a signal peptide directing secretion. A compositionally biased stretch (basic and acidic residues) spans 102–118 (RADRWRDRRGPRGEGRL). The tract at residues 102–122 (RADRWRDRRGPRGEGRLRPRA) is disordered. Positions 113 to 286 (RGEGRLRPRA…PASVAKDVVD (174 aa)) are serine protease. Residues His-140, Asp-170, and Ser-244 each act as charge relay system in the active site. Substrate contacts are provided by residues 242 to 244 (GNS) and 299 to 303 (LGVQI). PDZ domains lie at 287–378 (SLIK…LWRS) and 401–491 (ATGE…IEAQ). 2 disordered regions span residues 389 to 411 (GTLP…DEGQ) and 428 to 447 (EDGK…AGDR).

It belongs to the peptidase S1C family.

Its subcellular location is the periplasm. The enzyme catalyses Acts on substrates that are at least partially unfolded. The cleavage site P1 residue is normally between a pair of hydrophobic residues, such as Val-|-Val.. In terms of biological role, might be efficient in the degradation of transiently denatured and unfolded proteins which accumulate in the periplasm following stress conditions. The polypeptide is Probable periplasmic serine endoprotease DegP-like (degP1) (Rhizobium meliloti (strain 1021) (Ensifer meliloti)).